The following is an 82-amino-acid chain: Small ribosomal subunit protein uS17 (82 aa).

The protein belongs to the universal ribosomal protein uS17 family. Part of the 30S ribosomal subunit.

One of the primary rRNA binding proteins, it binds specifically to the 5'-end of 16S ribosomal RNA. The chain is Small ribosomal subunit protein uS17 from Rickettsia rickettsii (strain Iowa).